The chain runs to 229 residues: MANELTWHDVLAEEKQQPYFLNTLQTVASERQSGVTIYPPQKDVFNAFRFTELGDVKVVILGQDPYHGPGQAHGLAFSVRPGIATPPSLLNMYKELENTIPGFTRPNHGYLESWARQGVLLLNTVLTVRAGQAHSHASLGWETFTDKVISLINQHRKGVVFLLWGSHAQKKGAIIDKQRHHVLKAPHPSPLSAHRGFFGCNHFVLANQWLEQRGETPIDWMPVLPAESE.

The Proton acceptor role is filled by Asp64.

It belongs to the uracil-DNA glycosylase (UDG) superfamily. UNG family.

It localises to the cytoplasm. It catalyses the reaction Hydrolyzes single-stranded DNA or mismatched double-stranded DNA and polynucleotides, releasing free uracil.. Its function is as follows. Excises uracil residues from the DNA which can arise as a result of misincorporation of dUMP residues by DNA polymerase or due to deamination of cytosine. This Escherichia coli O7:K1 (strain IAI39 / ExPEC) protein is Uracil-DNA glycosylase.